A 291-amino-acid chain; its full sequence is Gamma-sarcoglycan (291 aa).

The helical; Signal-anchor for type II membrane protein transmembrane segment at 38–58 threads the bilayer; sequence LFVLLLLIVLLVNFALTIWIL. The Extracellular segment spans residues 59–291; that stretch reads RVMWFSPVGM…TCHEHSHLCL (233 aa). N-linked (GlcNAc...) asparagine glycosylation occurs at N110. 2 disulfides stabilise this stretch: C265–C290 and C267–C283.

Belongs to the sarcoglycan beta/delta/gamma/zeta family. Interacts with the syntrophin SNTA1. Cross-link to form 2 major subcomplexes: one consisting of SGCB, SGCD and SGCG and the other consisting of SGCB and SGCD. The association between SGCB and SGCG is particularly strong while SGCA is loosely associated with the other sarcoglycans. Interacts with FLNC. Disulfide bonds are present.

It is found in the cell membrane. The protein resides in the sarcolemma. Its subcellular location is the cytoplasm. The protein localises to the cytoskeleton. Functionally, component of the sarcoglycan complex, a subcomplex of the dystrophin-glycoprotein complex which forms a link between the F-actin cytoskeleton and the extracellular matrix. The polypeptide is Gamma-sarcoglycan (SGCG) (Bos taurus (Bovine)).